The sequence spans 256 residues: Non-homologous end joining protein Ku 2 (256 aa).

The region spanning 13-184 (FADTDVAVKL…SLELQESPVS (172 aa)) is the Ku domain.

This sequence belongs to the prokaryotic Ku family. Homodimer. Interacts with LigD.

In terms of biological role, with LigD forms a non-homologous end joining (NHEJ) DNA repair enzyme, which repairs dsDNA breaks with reduced fidelity. Binds linear dsDNA with 5'- and 3'- overhangs but not closed circular dsDNA nor ssDNA. Recruits and stimulates the ligase activity of LigD. In Geotalea uraniireducens (strain Rf4) (Geobacter uraniireducens), this protein is Non-homologous end joining protein Ku 2.